Consider the following 574-residue polypeptide: Cytochrome P450 4g15 (574 aa).

Residues 288 to 327 form a disordered region; sequence REREQNGGVDQTPSTAGSDEKDREKDKEKASPVAGLSYGQ. Residues 295–304 are compositionally biased toward polar residues; sequence GVDQTPSTAG. The segment covering 305–317 has biased composition (basic and acidic residues); the sequence is SDEKDREKDKEKA. Residues Glu379 and Cys519 each coordinate heme.

Belongs to the cytochrome P450 family. Heme is required as a cofactor. In terms of tissue distribution, expressed in larval brain cortex cells and ring glands and weakly in larval digestive system and adult nervous system.

Its subcellular location is the endoplasmic reticulum membrane. It is found in the microsome membrane. Functionally, probably involved in steroid hormones biosynthesis. This Drosophila melanogaster (Fruit fly) protein is Cytochrome P450 4g15 (Cyp4g15).